Reading from the N-terminus, the 185-residue chain is Shikimate kinase (185 aa).

12 to 17 (GSGKTT) lines the ATP pocket. Mg(2+) is bound at residue Thr16. The substrate site is built by Asp34, Arg58, and Gly79. Arg116 contacts ATP. Arg135 lines the substrate pocket.

It belongs to the shikimate kinase family. As to quaternary structure, monomer. It depends on Mg(2+) as a cofactor.

The protein resides in the cytoplasm. It catalyses the reaction shikimate + ATP = 3-phosphoshikimate + ADP + H(+). The protein operates within metabolic intermediate biosynthesis; chorismate biosynthesis; chorismate from D-erythrose 4-phosphate and phosphoenolpyruvate: step 5/7. Functionally, catalyzes the specific phosphorylation of the 3-hydroxyl group of shikimic acid using ATP as a cosubstrate. The sequence is that of Shikimate kinase from Corynebacterium jeikeium (strain K411).